The sequence spans 203 residues: Molybdenum cofactor guanylyltransferase (203 aa).

GTP is bound by residues 12 to 14 (LAG), Lys-25, Asn-53, Asp-71, and Asp-101. Asp-101 serves as a coordination point for Mg(2+).

This sequence belongs to the MobA family. As to quaternary structure, monomer. The cofactor is Mg(2+).

The protein localises to the cytoplasm. It carries out the reaction Mo-molybdopterin + GTP + H(+) = Mo-molybdopterin guanine dinucleotide + diphosphate. In terms of biological role, transfers a GMP moiety from GTP to Mo-molybdopterin (Mo-MPT) cofactor (Moco or molybdenum cofactor) to form Mo-molybdopterin guanine dinucleotide (Mo-MGD) cofactor. This Cupriavidus metallidurans (strain ATCC 43123 / DSM 2839 / NBRC 102507 / CH34) (Ralstonia metallidurans) protein is Molybdenum cofactor guanylyltransferase.